Consider the following 189-residue polypeptide: UPF0301 protein PSPA7_0505 (189 aa).

Belongs to the UPF0301 (AlgH) family.

The polypeptide is UPF0301 protein PSPA7_0505 (Pseudomonas paraeruginosa (strain DSM 24068 / PA7) (Pseudomonas aeruginosa (strain PA7))).